Consider the following 208-residue polypeptide: N-(5'-phosphoribosyl)anthranilate isomerase (208 aa).

This sequence belongs to the TrpF family.

The enzyme catalyses N-(5-phospho-beta-D-ribosyl)anthranilate = 1-(2-carboxyphenylamino)-1-deoxy-D-ribulose 5-phosphate. It functions in the pathway amino-acid biosynthesis; L-tryptophan biosynthesis; L-tryptophan from chorismate: step 3/5. In Natronomonas pharaonis (strain ATCC 35678 / DSM 2160 / CIP 103997 / JCM 8858 / NBRC 14720 / NCIMB 2260 / Gabara) (Halobacterium pharaonis), this protein is N-(5'-phosphoribosyl)anthranilate isomerase.